The chain runs to 291 residues: N-acetylmannosamine kinase (291 aa).

ATP contacts are provided by residues 5–12 (AIDIGGTK) and 132–139 (GVGGGVVC). His156, Cys166, Cys168, and Cys173 together coordinate Zn(2+).

The protein belongs to the ROK (NagC/XylR) family. NanK subfamily. Homodimer.

The enzyme catalyses an N-acyl-D-mannosamine + ATP = an N-acyl-D-mannosamine 6-phosphate + ADP + H(+). It functions in the pathway amino-sugar metabolism; N-acetylneuraminate degradation; D-fructose 6-phosphate from N-acetylneuraminate: step 2/5. Its function is as follows. Catalyzes the phosphorylation of N-acetylmannosamine (ManNAc) to ManNAc-6-P. The polypeptide is N-acetylmannosamine kinase (Salmonella paratyphi A (strain ATCC 9150 / SARB42)).